The chain runs to 317 residues: Exopolysaccharide production protein ExoZ (317 aa).

7 helical membrane-spanning segments follow: residues 14–34 (TIGA…MWVI), 53–73 (IVPV…AGLF), 100–120 (IWPV…YAVF), 132–152 (LPVV…VAFD), 185–205 (LAVG…IGVL), 206–226 (GLPF…IGVL), and 268–288 (IGLG…LIGI).

This sequence belongs to the acyltransferase 3 family.

The protein resides in the cell membrane. Required for the acetyl modification of the third sugar (glucose) of the octasaccharide subunit of succinoglycan (EPS I). The polypeptide is Exopolysaccharide production protein ExoZ (exoZ) (Rhizobium meliloti (strain 1021) (Ensifer meliloti)).